Reading from the N-terminus, the 96-residue chain is Probable quinol oxidase subunit 4 (96 aa).

The next 3 membrane-spanning stretches (helical) occupy residues 8 to 28 (TVGF…TLYT), 36 to 56 (ITII…MFMH), and 68 to 88 (FKVL…YWVM).

This sequence belongs to the cytochrome c oxidase bacterial subunit 4 family.

Its subcellular location is the cell membrane. The catalysed reaction is 2 a quinol + O2 = 2 a quinone + 2 H2O. Functionally, catalyzes quinol oxidation with the concomitant reduction of oxygen to water. The sequence is that of Probable quinol oxidase subunit 4 (qoxD) from Staphylococcus saprophyticus subsp. saprophyticus (strain ATCC 15305 / DSM 20229 / NCIMB 8711 / NCTC 7292 / S-41).